The sequence spans 64 residues: Prokaryotic ubiquitin-like protein Pup (64 aa).

A compositionally biased stretch (basic and acidic residues) spans 1 to 11; it reads MAQEQTKRGGG. The disordered stretch occupies residues 1-37; the sequence is MAQEQTKRGGGGDDEDDFASSTAAGQERREKLAEDTD. The ARC ATPase binding stretch occupies residues 21 to 58; the sequence is STAAGQERREKLAEDTDDLLDEIDDVLEENAEDFVRAY. Positions 24–52 form a coiled coil; the sequence is AGQERREKLAEDTDDLLDEIDDVLEENAE. Glutamine 64 is modified (deamidated glutamine). Glutamine 64 participates in a covalent cross-link: Isoglutamyl lysine isopeptide (Gln-Lys) (interchain with K-? in acceptor proteins).

Belongs to the prokaryotic ubiquitin-like protein family. Strongly interacts with the proteasome-associated ATPase ARC through a hydrophobic interface; the interacting region of Pup lies in its C-terminal half. There is one Pup binding site per ARC hexamer ring. In terms of processing, is modified by deamidation of its C-terminal glutamine to glutamate by the deamidase Dop, a prerequisite to the subsequent pupylation process.

It participates in protein degradation; proteasomal Pup-dependent pathway. Its function is as follows. Protein modifier that is covalently attached to lysine residues of substrate proteins, thereby targeting them for proteasomal degradation. The tagging system is termed pupylation. This Mycolicibacterium paratuberculosis (strain ATCC BAA-968 / K-10) (Mycobacterium paratuberculosis) protein is Prokaryotic ubiquitin-like protein Pup.